Reading from the N-terminus, the 131-residue chain is Glycine cleavage system H protein (131 aa).

Residues 24–106 (TLRVGITDYA…YGEGWLVDLQ (83 aa)) enclose the Lipoyl-binding domain. Lysine 65 carries the post-translational modification N6-lipoyllysine.

This sequence belongs to the GcvH family. The glycine cleavage system is composed of four proteins: P, T, L and H. It depends on (R)-lipoate as a cofactor.

Functionally, the glycine cleavage system catalyzes the degradation of glycine. The H protein shuttles the methylamine group of glycine from the P protein to the T protein. This chain is Glycine cleavage system H protein, found in Mycobacterium sp. (strain JLS).